A 228-amino-acid chain; its full sequence is Triosephosphate isomerase (228 aa).

Residue 12 to 14 (NFK) coordinates substrate. The active-site Electrophile is the H96. E144 acts as the Proton acceptor in catalysis. Substrate contacts are provided by residues I149, G184, and 205 to 206 (AS).

This sequence belongs to the triosephosphate isomerase family. In terms of assembly, homotetramer; dimer of dimers.

It is found in the cytoplasm. The enzyme catalyses D-glyceraldehyde 3-phosphate = dihydroxyacetone phosphate. It functions in the pathway carbohydrate biosynthesis; gluconeogenesis. Its pathway is carbohydrate degradation; glycolysis; D-glyceraldehyde 3-phosphate from glycerone phosphate: step 1/1. In terms of biological role, involved in the gluconeogenesis. Catalyzes stereospecifically the conversion of dihydroxyacetone phosphate (DHAP) to D-glyceraldehyde-3-phosphate (G3P). This is Triosephosphate isomerase from Pyrococcus furiosus (strain ATCC 43587 / DSM 3638 / JCM 8422 / Vc1).